Reading from the N-terminus, the 254-residue chain is tRNA uridine(34) hydroxylase (254 aa).

The region spanning 123–217 is the Rhodanese domain; sequence QDPNVILLDT…YLESIPEGES (95 aa). Catalysis depends on C177, which acts as the Cysteine persulfide intermediate.

It belongs to the TrhO family.

The catalysed reaction is uridine(34) in tRNA + AH2 + O2 = 5-hydroxyuridine(34) in tRNA + A + H2O. Catalyzes oxygen-dependent 5-hydroxyuridine (ho5U) modification at position 34 in tRNAs. The polypeptide is tRNA uridine(34) hydroxylase (Legionella pneumophila (strain Lens)).